A 443-amino-acid polypeptide reads, in one-letter code: Enolase B (443 aa).

His-156 and Glu-165 together coordinate substrate. Glu-208 acts as the Proton donor in catalysis. Residues Asp-243, Glu-296, and Asp-323 each contribute to the Mg(2+) site. Substrate-binding residues include Glu-296 and Asp-323. Lys-348 serves as the catalytic Proton acceptor. Substrate is bound by residues 375 to 378 (SHRS) and Lys-399.

The protein belongs to the enolase family. In terms of assembly, homodimer. Mg(2+) is required as a cofactor.

It is found in the cytoplasm. It catalyses the reaction (2R)-2-phosphoglycerate = phosphoenolpyruvate + H2O. The protein operates within carbohydrate degradation; glycolysis; pyruvate from D-glyceraldehyde 3-phosphate: step 4/5. In Dictyostelium discoideum (Social amoeba), this protein is Enolase B (enoB).